Here is a 787-residue protein sequence, read N- to C-terminus: Integrin beta-3 (787 aa).

The signal sequence occupies residues 1–25 (MRTRRPGQLWATLLALGALAGVVVG). The Extracellular portion of the chain corresponds to 27–717 (SNICTTRGVN…EEPECPKGPD (691 aa)). A PSI domain is found at 29 to 75 (ICTTRGVNSCQQCLAVSPVCAWCSDESLPQNSPRCNLKKNLLKDKCS). 19 cysteine pairs are disulfide-bonded: C30/C48, C38/C460, C41/C63, C51/C74, C202/C209, C257/C298, C399/C411, C431/C458, C462/C482, C473/C485, C487/C496, C498/C528, C511/C526, C520/C531, C533/C546, C548/C569, C553/C567, C561/C572, and C574/C583. One can recognise a VWFA domain in the interval 134–376 (DYPVDIYYLM…QLIVDAYGKI (243 aa)). Mg(2+) is bound by residues S146 and S148. The Ca(2+) site is built by S148, D151, D152, and D183. The CX3CL1-binding stretch occupies residues 202–209 (CYTMKSTC). An involved in CX3CL1-, NRG1-, FGF1- and IGF1-binding region spans residues 202 to 209 (CYTMKSTC). Ca(2+) is bound by residues N240, D242, P244, E245, and D276. E245 provides a ligand contact to Mg(2+). The interval 292-312 (LPNDGRCHIGPDNHYSASTTM) is CX3CL1-binding. Residues N345 and N396 are each glycosylated (N-linked (GlcNAc...) asparagine). 4 consecutive I-EGF domains span residues 462 to 497 (CQAF…SMCE), 498 to 547 (CSEE…KYCE), 548 to 584 (CDDF…YYCN), and 585 to 624 (CTTR…DTCE). Residue N477 is glycosylated (N-linked (GlcNAc...) asparagine). An N-linked (GlcNAc...) asparagine glycan is attached at N584. 9 cysteine pairs are disulfide-bonded: C585–C608, C592–C606, C600–C611, C613–C623, C626–C629, C633–C680, C639–C660, C642–C656, and C688–C712. The N-linked (GlcNAc...) asparagine glycan is linked to N679. Residues 718–738 (ILVVLLSVMGAILLIGLATLL) traverse the membrane as a helical segment. At 739–787 (IWKLLITIHDRKEFAKFEEERARAKWDTANNPLYKEATSTFTNITYRGT) the chain is on the cytoplasmic side. T766 carries the phosphothreonine modification. The residue at position 772 (Y772) is a Phosphotyrosine. The LIR signature appears at 776–782 (TSTFTNI). T778 bears the Phosphothreonine mark. A Phosphotyrosine modification is found at Y784.

This sequence belongs to the integrin beta chain family. Heterodimer of an alpha and a beta subunit. Beta-3 (ITGB3) associates with either alpha-IIB (ITGA2B) or alpha-V (ITGAV). Interacts with FLNB and COMP. Interacts with PDIA6 following platelet stimulation. Interacts with SYK; upon activation by ITGB3 promotes platelet adhesion. Interacts with MYO10. Interacts with DAB2. Interacts with FERMT2. Integrin ITGAV:ITGB3 interacts with FBLN5 (via N-terminus). Interacts with EMP2; regulates the levels of the heterodimer ITGA5:ITGB3 integrin expression on the plasma membrane. ITGAV:ITGB3 interacts with CCN3. ITGAV:ITGB3 and ITGA2B:ITGB3 interact with SELP (via C-type lectin domain); the interaction mediates cell-cell interaction and adhesion. ITGAV:ITGB3 interacts with AGRA2. ITGAV:ITGB3 is found in a ternary complex with CX3CR1 and CX3CL1. ITGAV:ITGB3 is found in a ternary complex with NRG1 and ERBB3. ITGAV:ITGB3 is found in a ternary complex with FGF1 and FGFR1. ITGAV:ITGB3 interacts with FGF2; it is likely that FGF2 can simultaneously bind ITGAV:ITGB3 and FGF receptors. ITGAV:ITGB3 binds to IL1B. ITGAV:ITGB3 is found in a ternary complex with IGF1 and IGF1R. ITGAV:ITGB3 interacts with IGF2. ITGAV:ITGB3 interacts with FBN1. ITGAV:ITGB3 interacts with CD9, CD81 and CD151 (via second extracellular domain). Interacts (via the allosteric site (site 2)) with CXCL12 in a CXCR4-independent manner. Interacts with MXRA8/DICAM; the interaction inhibits ITGAV:ITGB3 heterodimer formation. ITGAV:ITGB3 interacts with PTN. Forms a complex with PTPRZ1 and PTN that stimulates endothelial cell migration through ITGB3 Tyr-772 phosphorylation. ITGAV:ITGB3 interacts with SLC6A4. Interacts with SLC6A4 (via C-terminus); this interaction regulates SLC6A4 trafficking. ITGA2B:ITGB3 interacts with PPIA/CYPA; the interaction is ROS and PPIase activity-dependent and is increased in the presence of thrombin. Interacts with tensin TNS3; TNS3 also interacts with PEAK1, thus acting as an adapter molecule to bridge the association of PEAK1 with ITGB3. Interacts with TM4SF19. In terms of processing, phosphorylated on tyrosine residues in response to thrombin-induced platelet aggregation. Probably involved in outside-in signaling.

It is found in the cell membrane. Its subcellular location is the cell projection. The protein localises to the lamellipodium membrane. The protein resides in the cell junction. It localises to the focal adhesion. It is found in the postsynaptic cell membrane. Its subcellular location is the synapse. In terms of biological role, integrin alpha-V/beta-3 (ITGAV:ITGB3) is a receptor for cytotactin, fibronectin, laminin, matrix metalloproteinase-2, osteopontin, osteomodulin, prothrombin, thrombospondin, vitronectin and von Willebrand factor. Integrin alpha-IIB/beta-3 (ITGA2B:ITGB3) is a receptor for fibronectin, fibrinogen, plasminogen, prothrombin, thrombospondin and vitronectin. Integrins alpha-IIB/beta-3 and alpha-V/beta-3 recognize the sequence R-G-D in a wide array of ligands. Integrin alpha-IIB/beta-3 recognizes the sequence H-H-L-G-G-G-A-K-Q-A-G-D-V in fibrinogen gamma chain. Following activation integrin alpha-IIB/beta-3 brings about platelet/platelet interaction through binding of soluble fibrinogen. This step leads to rapid platelet aggregation which physically plugs ruptured endothelial surfaces. Fibrinogen binding enhances SELP expression in activated platelets. ITGAV:ITGB3 binds to fractalkine (CX3CL1) and acts as its coreceptor in CX3CR1-dependent fractalkine signaling. ITGAV:ITGB3 binds to NRG1 (via EGF domain) and this binding is essential for NRG1-ERBB signaling. ITGAV:ITGB3 binds to FGF1 and this binding is essential for FGF1 signaling. ITGAV:ITGB3 binds to FGF2 and this binding is essential for FGF2 signaling. ITGAV:ITGB3 binds to IGF1 and this binding is essential for IGF1 signaling. ITGAV:ITGB3 binds to IGF2 and this binding is essential for IGF2 signaling. ITGAV:ITGB3 binds to IL1B and this binding is essential for IL1B signaling. ITGAV:ITGB3 binds to PLA2G2A via a site (site 2) which is distinct from the classical ligand-binding site (site 1) and this induces integrin conformational changes and enhanced ligand binding to site 1. ITGAV:ITGB3 acts as a receptor for fibrillin-1 (FBN1) and mediates R-G-D-dependent cell adhesion to FBN1. In brain, plays a role in synaptic transmission and plasticity. Involved in the regulation of the serotonin neurotransmission, is required to localize to specific compartments within the synapse the serotonin receptor SLC6A4 and for an appropriate reuptake of serotonin. Controls excitatory synaptic strength by regulating GRIA2-containing AMPAR endocytosis, which affects AMPAR abundance and composition. ITGAV:ITGB3 acts as a receptor for CD40LG. ITGAV:ITGB3 acts as a receptor for IBSP and promotes cell adhesion and migration to IBSP. This Rattus norvegicus (Rat) protein is Integrin beta-3.